Reading from the N-terminus, the 255-residue chain is Small ribosomal subunit protein uS2 (255 aa).

A disordered region spans residues 233-255 (DFVAEEAASEESLEELAEIVEGK).

The protein belongs to the universal ribosomal protein uS2 family.

The protein is Small ribosomal subunit protein uS2 of Lactococcus lactis subsp. cremoris (strain SK11).